A 756-amino-acid chain; its full sequence is Catalase-peroxidase (756 aa).

A signal peptide spans 1–26 (MKGKTVNKQTLAALVSALLVFNPAVA). Residues 126–248 (WHSAGTYRTL…LGATHMGLIY (123 aa)) constitute a cross-link (tryptophyl-tyrosyl-methioninium (Trp-Tyr) (with M-274)). His127 functions as the Proton acceptor in the catalytic mechanism. Positions 248–274 (YVNPEGPKGVPDPLGSAKNIRTAFSRM) form a cross-link, tryptophyl-tyrosyl-methioninium (Tyr-Met) (with W-126). Position 289 (His289) interacts with heme b.

The protein belongs to the peroxidase family. Peroxidase/catalase subfamily. In terms of assembly, homodimer or homotetramer. Heme b is required as a cofactor. Post-translationally, formation of the three residue Trp-Tyr-Met cross-link is important for the catalase, but not the peroxidase activity of the enzyme.

It catalyses the reaction H2O2 + AH2 = A + 2 H2O. The enzyme catalyses 2 H2O2 = O2 + 2 H2O. Bifunctional enzyme with both catalase and broad-spectrum peroxidase activity. This chain is Catalase-peroxidase, found in Shewanella loihica (strain ATCC BAA-1088 / PV-4).